Consider the following 308-residue polypeptide: Olfactory receptor 4N5 (308 aa).

At 1–25 the chain is on the extracellular side; the sequence is METQNLTVVTEFILLGLTQSQDAQL. Asparagine 5 carries N-linked (GlcNAc...) asparagine glycosylation. Residues 26–49 traverse the membrane as a helical segment; that stretch reads LVFVLVLIFYLIILPGNFLIIFTI. Over 50-57 the chain is Cytoplasmic; that stretch reads KSDPGLTA. The chain crosses the membrane as a helical span at residues 58 to 79; it reads PLYFFLGNLALLDASYSFIVVP. The Extracellular portion of the chain corresponds to 80 to 100; sequence RMLVDFLSEKKVISYRSCITQ. A disulfide bridge connects residues cysteine 97 and cysteine 189. The chain crosses the membrane as a helical span at residues 101–120; the sequence is LFFLHFLGAGEMFLLVVMAF. The Cytoplasmic portion of the chain corresponds to 121–139; that stretch reads DRYIAICRPLHYSTIMNPR. The chain crosses the membrane as a helical span at residues 140-158; it reads ACYALSLVLWLGGFIHSIV. Residues 159–195 are Extracellular-facing; sequence QVALILHLPFCGPNQLDNFFCDVPQVIKLACTNTFVV. Residues 196-219 traverse the membrane as a helical segment; that stretch reads ELLMVSNSGLLSLLCFLGLLASYA. Residues 220 to 235 lie on the Cytoplasmic side of the membrane; the sequence is VILCRIREHSSEGKSK. The helical transmembrane segment at 236–258 threads the bilayer; the sequence is AISTCTTHIIIIFLMFGPAIFIY. The Extracellular segment spans residues 259-269; it reads TCPFQAFPADK. The helical transmembrane segment at 270 to 289 threads the bilayer; it reads VVSLFHTVIFPLMNPVIYTL. Residues 290 to 308 are Cytoplasmic-facing; that stretch reads RNQEVKASMRKLLSQHMFC.

The protein belongs to the G-protein coupled receptor 1 family.

The protein localises to the cell membrane. Odorant receptor. This is Olfactory receptor 4N5 (OR4N5) from Homo sapiens (Human).